The sequence spans 1080 residues: DNA polymerase II large subunit (1080 aa).

The protein belongs to the archaeal DNA polymerase II family. Heterodimer of a large subunit and a small subunit.

The enzyme catalyses DNA(n) + a 2'-deoxyribonucleoside 5'-triphosphate = DNA(n+1) + diphosphate. It catalyses the reaction Exonucleolytic cleavage in the 3'- to 5'-direction to yield nucleoside 5'-phosphates.. Functionally, possesses two activities: a DNA synthesis (polymerase) and an exonucleolytic activity that degrades single-stranded DNA in the 3'- to 5'-direction. Has a template-primer preference which is characteristic of a replicative DNA polymerase. The sequence is that of DNA polymerase II large subunit from Picrophilus torridus (strain ATCC 700027 / DSM 9790 / JCM 10055 / NBRC 100828 / KAW 2/3).